The chain runs to 201 residues: Pyridoxine/pyridoxamine 5'-phosphate oxidase (201 aa).

Residues 49 to 54, 64 to 65, Lys71, and Gln93 each bind FMN; these read RMVLLK and YT. Lys54 serves as a coordination point for substrate. 3 residues coordinate substrate: Tyr111, Arg115, and Ser119. FMN-binding positions include 128–129 and Trp172; that span reads QS. 178 to 180 serves as a coordination point for substrate; it reads RLH. Arg182 contributes to the FMN binding site.

The protein belongs to the pyridoxamine 5'-phosphate oxidase family. In terms of assembly, homodimer. The cofactor is FMN.

It catalyses the reaction pyridoxamine 5'-phosphate + O2 + H2O = pyridoxal 5'-phosphate + H2O2 + NH4(+). The catalysed reaction is pyridoxine 5'-phosphate + O2 = pyridoxal 5'-phosphate + H2O2. It functions in the pathway cofactor metabolism; pyridoxal 5'-phosphate salvage; pyridoxal 5'-phosphate from pyridoxamine 5'-phosphate: step 1/1. The protein operates within cofactor metabolism; pyridoxal 5'-phosphate salvage; pyridoxal 5'-phosphate from pyridoxine 5'-phosphate: step 1/1. Its function is as follows. Catalyzes the oxidation of either pyridoxine 5'-phosphate (PNP) or pyridoxamine 5'-phosphate (PMP) into pyridoxal 5'-phosphate (PLP). This chain is Pyridoxine/pyridoxamine 5'-phosphate oxidase, found in Roseobacter denitrificans (strain ATCC 33942 / OCh 114) (Erythrobacter sp. (strain OCh 114)).